We begin with the raw amino-acid sequence, 349 residues long: Shematrin-like protein 1 (349 aa).

The signal sequence occupies residues Met1–Ala16.

In terms of tissue distribution, prismatic layer of shell (at protein level).

The protein localises to the secreted. The protein is Shematrin-like protein 1 of Margaritifera margaritifera (Freshwater pearl mussel).